Reading from the N-terminus, the 338-residue chain is Phenylalanine--tRNA ligase alpha subunit (338 aa).

Glutamate 253 provides a ligand contact to Mg(2+).

This sequence belongs to the class-II aminoacyl-tRNA synthetase family. Phe-tRNA synthetase alpha subunit type 1 subfamily. Tetramer of two alpha and two beta subunits. Mg(2+) is required as a cofactor.

The protein resides in the cytoplasm. The catalysed reaction is tRNA(Phe) + L-phenylalanine + ATP = L-phenylalanyl-tRNA(Phe) + AMP + diphosphate + H(+). The protein is Phenylalanine--tRNA ligase alpha subunit of Legionella pneumophila (strain Paris).